Here is a 123-residue protein sequence, read N- to C-terminus: Small ribosomal subunit protein uS12c (123 aa).

Belongs to the universal ribosomal protein uS12 family. As to quaternary structure, part of the 30S ribosomal subunit.

The protein localises to the plastid. The protein resides in the chloroplast. With S4 and S5 plays an important role in translational accuracy. Located at the interface of the 30S and 50S subunits. The sequence is that of Small ribosomal subunit protein uS12c (rps12) from Anthoceros angustus (Hornwort).